We begin with the raw amino-acid sequence, 90 residues long: MVSSGYLQAVMLLLAVQLLCFRPSDAEQEAGTVIPAESRPCVDCHAFEFMQRALQDLKKTAFNLDARTETLVLRAERRALCDCMPTNTLR.

The first 26 residues, 1 to 26 (MVSSGYLQAVMLLLAVQLLCFRPSDA), serve as a signal peptide directing secretion.

It belongs to the NICOL family.

It localises to the secreted. Functionally, mRNA-binding protein which interacts with a range of target mRNAs and may promote extracellular matrix production. The chain is NELL2-interacting cell ontogeny regulator 1 from Salmo salar (Atlantic salmon).